Here is a 178-residue protein sequence, read N- to C-terminus: Orotate phosphoribosyltransferase (178 aa).

Residues Arg-92, Lys-93, Lys-96, and 118–126 contribute to the 5-phospho-alpha-D-ribose 1-diphosphate site; that span reads EDVTTTGGS. Residues Thr-122 and Arg-150 each contribute to the orotate site.

It belongs to the purine/pyrimidine phosphoribosyltransferase family. PyrE subfamily. In terms of assembly, homodimer. It depends on Mg(2+) as a cofactor.

The enzyme catalyses orotidine 5'-phosphate + diphosphate = orotate + 5-phospho-alpha-D-ribose 1-diphosphate. It participates in pyrimidine metabolism; UMP biosynthesis via de novo pathway; UMP from orotate: step 1/2. Its function is as follows. Catalyzes the transfer of a ribosyl phosphate group from 5-phosphoribose 1-diphosphate to orotate, leading to the formation of orotidine monophosphate (OMP). The polypeptide is Orotate phosphoribosyltransferase (Methanosphaera stadtmanae (strain ATCC 43021 / DSM 3091 / JCM 11832 / MCB-3)).